The primary structure comprises 151 residues: Transcriptional regulator MraZ (151 aa).

SpoVT-AbrB domains follow at residues 5-51 (AHEL…PVAE) and 81-124 (AEIL…GREQ).

This sequence belongs to the MraZ family. In terms of assembly, forms oligomers.

It is found in the cytoplasm. It localises to the nucleoid. The protein is Transcriptional regulator MraZ of Neisseria meningitidis serogroup A / serotype 4A (strain DSM 15465 / Z2491).